Consider the following 180-residue polypeptide: LDLR chaperone boca (180 aa).

Positions 1 to 18 (MQTRLVLLLLALTPLVLA) are cleaved as a signal peptide. The span at 48–61 (QWEEDEEPLEDDEL) shows a compositional bias: acidic residues. Positions 48 to 78 (QWEEDEEPLEDDELPEHLRPQPKLDLSNLDS) are disordered. Residues 93–166 (TLMTFVSVTG…QERCKGVTIE (74 aa)) are structured core. Residues 177 to 180 (KDEL) carry the Prevents secretion from ER motif.

Belongs to the MESD family. In terms of assembly, monomer. Interacts with Arrow and Yolkless.

It localises to the endoplasmic reticulum. In terms of biological role, chaperone specifically assisting the folding of beta-propeller/EGF modules within the family of low-density lipoprotein receptors (LDLRs). Acts as a modulator of the Wg pathway, since some LDLRs are coreceptors for the canonical Wnt pathway. The polypeptide is LDLR chaperone boca (boca) (Drosophila melanogaster (Fruit fly)).